An 852-amino-acid polypeptide reads, in one-letter code: Ral guanine nucleotide dissociation stimulator (852 aa).

The region spanning 57–194 (KVRTVKAGTL…RAHLLLAQLE (138 aa)) is the N-terminal Ras-GEF domain. The 263-residue stretch at 324–586 (PPDLVAEQFT…YTLSCELEPP (263 aa)) folds into the Ras-GEF domain. Disordered stretches follow at residues 606–627 (WSDR…SKSC) and 665–711 (VPES…STTR). 2 stretches are compositionally biased toward low complexity: residues 613 to 624 (STELSTSSSAHS) and 683 to 710 (SSPE…VSTT). The Ras-associating domain occupies 736-823 (DCCIIRVSLD…YDFILKKRTF (88 aa)). Tyr752 carries the phosphotyrosine modification.

As to quaternary structure, interacts with RIT1 and RIT2. Interacts with OOG1. Interacts with TRAF3. Interacts with HRAS. Post-translationally, phosphorylation of Tyr-752 by MET blocks HRAS binding.

The protein localises to the cytoplasm. Its subcellular location is the nucleus. In terms of biological role, functions as a guanine nucleotide exchange factor (GEF) activating either RalA or RalB GTPases and plays an important role in intracellular transport. Interacts and acts as an effector molecule for R-Ras, H-Ras, K-Ras, and Rap. During bacterial clearance, recognizes 'Lys-33'-linked polyubiquitinated TRAF3 and subsequently mediates assembly of the exocyst complex. This chain is Ral guanine nucleotide dissociation stimulator (Ralgds), found in Mus musculus (Mouse).